The chain runs to 193 residues: uncharacterized protein (193 aa).

This is an uncharacterized protein from Dictyostelium discoideum (Social amoeba).